Here is a 580-residue protein sequence, read N- to C-terminus: mRNA-decapping enzyme 1A (580 aa).

S62 carries the phosphoserine modification. Positions 132 to 141 (RSQQAARDKQ) are enriched in basic and acidic residues. Disordered stretches follow at residues 132–154 (RSQQ…DHRP), 172–209 (QMGD…QDKS), and 245–276 (LPGD…NMGI). S142, S179, and S180 each carry phosphoserine. The span at 173–196 (MGDSNISSPGLQPSTQISNLGSTE) shows a compositional bias: polar residues. The segment covering 253 to 264 (EPSSFLPFSFEP) has biased composition (low complexity). S319 and S334 each carry phosphoserine. The segment covering 343–359 (QAVKTTPRQRSPLSSQP) has biased composition (polar residues). A disordered region spans residues 343–371 (QAVKTTPRQRSPLSSQPVPELSQASLAAS). T348 is modified (phosphothreonine). Phosphoserine is present on S353. R376 is modified (asymmetric dimethylarginine). At T401 the chain carries Phosphothreonine. Residues S422, S520, S521, and S523 each carry the phosphoserine modification. Residues 510 to 533 (TRSSDLERKASSPSPLTVGTSENQ) are disordered. Residues 520-531 (SSPSPLTVGTSE) are compositionally biased toward polar residues. T526 and T529 each carry phosphothreonine.

It belongs to the DCP1 family. In terms of assembly, forms a complex with EDC3, DCP2, DDX6 and EDC4/HEDLS, within this complex directly interacts with EDC3. Part of a cytoplasmic complex containing proteins involved in mRNA decay, including XRN1 and LSM1. Interacts with DCP1B. Interacts with DCP2. Interacts with DDX17 in an RNA-independent manner. Interacts with PNRC2. Interacts with SMAD4. Interacts with UPF1. Interacts with ZC3HAV1. Interacts with ZFP36L1. Interacts with NBDY. Interacts with DHX34; the interaction is RNA-independent. (Microbial infection) Cleaved by porcine reproductive and respiratory syndrome virus serine protease nsp4 after Glu-238. The cleavage inhibits DCP1A function.

Its subcellular location is the cytoplasm. The protein localises to the P-body. It is found in the nucleus. It carries out the reaction a 5'-end (N(7)-methyl 5'-triphosphoguanosine)-ribonucleoside in mRNA + H2O = N(7)-methyl-GDP + a 5'-end phospho-ribonucleoside in mRNA + 2 H(+). Necessary for the degradation of mRNAs, both in normal mRNA turnover and in nonsense-mediated mRNA decay. Removes the 7-methyl guanine cap structure from mRNA molecules, yielding a 5'-phosphorylated mRNA fragment and 7m-GDP. Contributes to the transactivation of target genes after stimulation by TGFB1. Essential for embryonic development. The sequence is that of mRNA-decapping enzyme 1A (DCP1A) from Sus scrofa (Pig).